A 209-amino-acid chain; its full sequence is Guanylate kinase (209 aa).

The Guanylate kinase-like domain maps to 8–186 (GVLYIVSAPS…ALQDLVAITR (179 aa)). 15–22 (APSGAGKT) provides a ligand contact to ATP.

Belongs to the guanylate kinase family.

Its subcellular location is the cytoplasm. The catalysed reaction is GMP + ATP = GDP + ADP. Essential for recycling GMP and indirectly, cGMP. The sequence is that of Guanylate kinase from Thiobacillus denitrificans (strain ATCC 25259 / T1).